The chain runs to 427 residues: rRNA-processing protein EBP2 (427 aa).

Composition is skewed to basic and acidic residues over residues 29-40 (KKKSQELKKEEP) and 49-65 (KKLE…KEVA). Residues 29-190 (KKKSQELKKE…FDSDADVVPH (162 aa)) form a disordered region. Positions 45–174 (ASNLKKLEKK…KEEQEEEQDV (130 aa)) form a coiled coil. A compositionally biased stretch (basic residues) spans 79-88 (KEKRKLKKEL). Positions 89 to 105 (KKMQEQDATEAQKHMSG) are enriched in basic and acidic residues. Phosphoserine is present on serine 104. Residues 106-126 (DEDESGDDREEEEEEEEEEEG) are compositionally biased toward acidic residues. Residues 127 to 138 (RLDLEKLAKSDS) show a composition bias toward basic and acidic residues. Acidic residues-rich tracts occupy residues 139–155 (ESED…EDED) and 163–185 (EEKE…DSDA). Phosphoserine is present on residues serine 177 and serine 183. Coiled-coil stretches lie at residues 234–265 (KDIY…KRLK) and 291–348 (KLIE…KHNE). Residues 361–427 (EVEGKRFDRG…PGKSRRARRF (67 aa)) are disordered. The span at 397-407 (ATSSADVSGFS) shows a compositional bias: polar residues. Residues 409–427 (RKMKGKTNRPGKSRRARRF) show a composition bias toward basic residues.

The protein belongs to the EBP2 family. As to quaternary structure, interacts with LOC1, NOP12, SIZ2, ULS1 and WSS1. In terms of processing, sumoylated.

It is found in the nucleus. The protein resides in the nucleolus. Required for the processing of the 27S pre-rRNA. Probably involved in the step of the processing of the 27 SA precursor into the 27 SB intermediate. The polypeptide is rRNA-processing protein EBP2 (EBP2) (Saccharomyces cerevisiae (strain ATCC 204508 / S288c) (Baker's yeast)).